Reading from the N-terminus, the 367-residue chain is tRNA-specific 2-thiouridylase MnmA (367 aa).

ATP contacts are provided by residues 9-16 (GLSGGVDS) and Met-35. Residues 95 to 97 (NPD) are interaction with target base in tRNA. Catalysis depends on Cys-100, which acts as the Nucleophile. Cys-100 and Cys-196 are disulfide-bonded. Gly-124 serves as a coordination point for ATP. The segment at 146–148 (KDQ) is interaction with tRNA. Catalysis depends on Cys-196, which acts as the Cysteine persulfide intermediate. An interaction with tRNA region spans residues 308 to 309 (RY).

The protein belongs to the MnmA/TRMU family.

The protein resides in the cytoplasm. It catalyses the reaction S-sulfanyl-L-cysteinyl-[protein] + uridine(34) in tRNA + AH2 + ATP = 2-thiouridine(34) in tRNA + L-cysteinyl-[protein] + A + AMP + diphosphate + H(+). In terms of biological role, catalyzes the 2-thiolation of uridine at the wobble position (U34) of tRNA, leading to the formation of s(2)U34. The protein is tRNA-specific 2-thiouridylase MnmA of Nitrosococcus oceani (strain ATCC 19707 / BCRC 17464 / JCM 30415 / NCIMB 11848 / C-107).